The primary structure comprises 83 residues: Protein Vpr (83 aa).

At S79 the chain carries Phosphoserine; by host.

Interacts with human UNG.

The protein resides in the virion. Its subcellular location is the host nucleus. Its function is as follows. Stimulates gene expression driven by the HIV-2 LTR. Prevents infected cells from undergoing mitosis and proliferating, by inducing arrest or delay in the G2 phase of the cell cycle. Cell cycle arrest creates a favorable environment for maximizing viral expression and production. This Pan troglodytes (Chimpanzee) protein is Protein Vpr.